A 685-amino-acid chain; its full sequence is Translation initiation factor IF-2 (685 aa).

Residues 60–79 (ISLAKTREPSKEKTEAKKPP) are disordered. Over residues 64-79 (KTREPSKEKTEAKKPP) the composition is skewed to basic and acidic residues. Positions 175–352 (NRPPVVTVMG…DIRCIPDSPV (178 aa)) constitute a tr-type G domain. The interval 184–191 (GHVDHGKT) is G1. 184 to 191 (GHVDHGKT) is a GTP binding site. Residues 209–213 (GITQS) are G2. A G3 region spans residues 230 to 233 (DTPG). GTP-binding positions include 230 to 234 (DTPGH) and 284 to 287 (NKID). The G4 stretch occupies residues 284–287 (NKID). A G5 region spans residues 321–323 (SAR).

Belongs to the TRAFAC class translation factor GTPase superfamily. Classic translation factor GTPase family. IF-2 subfamily.

It is found in the cytoplasm. Functionally, one of the essential components for the initiation of protein synthesis. Protects formylmethionyl-tRNA from spontaneous hydrolysis and promotes its binding to the 30S ribosomal subunits. Also involved in the hydrolysis of GTP during the formation of the 70S ribosomal complex. The polypeptide is Translation initiation factor IF-2 (Fervidobacterium nodosum (strain ATCC 35602 / DSM 5306 / Rt17-B1)).